We begin with the raw amino-acid sequence, 858 residues long: Bifunctional uridylyltransferase/uridylyl-removing enzyme (858 aa).

The interval 1 to 324 (MSASVAEPPP…PATSGVTRVL (324 aa)) is uridylyltransferase. Residues 325 to 681 (SPGRFVEKQG…ARPSPVGDAL (357 aa)) are uridylyl-removing. Residues 443–565 (VDQHILMVLR…VGSERRLTAL (123 aa)) enclose the HD domain. 2 ACT domains span residues 682 to 761 (QVLV…PEPS) and 790 to 858 (ILSV…AIAV).

The protein belongs to the GlnD family. It depends on Mg(2+) as a cofactor.

It catalyses the reaction [protein-PII]-L-tyrosine + UTP = [protein-PII]-uridylyl-L-tyrosine + diphosphate. It carries out the reaction [protein-PII]-uridylyl-L-tyrosine + H2O = [protein-PII]-L-tyrosine + UMP + H(+). Uridylyltransferase (UTase) activity is inhibited by glutamine, while glutamine activates uridylyl-removing (UR) activity. Modifies, by uridylylation and deuridylylation, the PII regulatory proteins (GlnB and homologs), in response to the nitrogen status of the cell that GlnD senses through the glutamine level. Under low glutamine levels, catalyzes the conversion of the PII proteins and UTP to PII-UMP and PPi, while under higher glutamine levels, GlnD hydrolyzes PII-UMP to PII and UMP (deuridylylation). Thus, controls uridylylation state and activity of the PII proteins, and plays an important role in the regulation of nitrogen assimilation and metabolism. The chain is Bifunctional uridylyltransferase/uridylyl-removing enzyme from Burkholderia pseudomallei (strain 1106a).